Here is a 288-residue protein sequence, read N- to C-terminus: Mycothiol S-conjugate amidase (288 aa).

Zn(2+)-binding residues include H12, D15, and H142.

This sequence belongs to the MshB deacetylase family. Mca subfamily. In terms of assembly, monomer. Requires Zn(2+) as cofactor.

It catalyses the reaction mycothiol S-conjugate + H2O = an N-acetyl-L-cysteine-S-conjugate + 1D-myo-inositol 2-amino-2-deoxy-alpha-D-glucopyranoside. Its activity is regulated as follows. Partially inhibited by MSH when MSmB is used as substrate. Competitively inhibited by the GlcNAc-cyclohexyl derivative 5-(4-chlorophenyl)-N-((2R,3R,4R,5S,6R)-2-(cyclohexylthio)-tetrahydro-4,5-dihydroxy-6-(hydroxymethyl)-2H-pyran-3-yl)furan-2-carboxamide, which also inhibits MshB. Functionally, a mycothiol (MSH, N-acetyl-cysteinyl-glucosaminyl-inositol) S-conjugate amidase, it recycles conjugated MSH to the N-acetyl cysteine conjugate and the MSH precursor. Involved in MSH-dependent detoxification of a number of alkylating agents and antibiotics. Activity is specific for the mycothiol moiety. Has a low but measurable deacetylation activity on GlcNAc-Ins (N-acetyl-glucosaminyl-inositol), and thus can also directly contribute to the production of MSH. This chain is Mycothiol S-conjugate amidase, found in Mycobacterium tuberculosis (strain ATCC 25618 / H37Rv).